The following is a 506-amino-acid chain: Lysine--tRNA ligase (506 aa).

Residues glutamate 415 and glutamate 422 each contribute to the Mg(2+) site.

This sequence belongs to the class-II aminoacyl-tRNA synthetase family. As to quaternary structure, homodimer. Mg(2+) serves as cofactor.

Its subcellular location is the cytoplasm. The catalysed reaction is tRNA(Lys) + L-lysine + ATP = L-lysyl-tRNA(Lys) + AMP + diphosphate. The chain is Lysine--tRNA ligase from Erwinia tasmaniensis (strain DSM 17950 / CFBP 7177 / CIP 109463 / NCPPB 4357 / Et1/99).